The primary structure comprises 329 residues: G-protein coupled bile acid receptor 1 (329 aa).

Residues 1 to 19 (MTSNSTREVPSPVPAGALG) are Extracellular-facing. The N-linked (GlcNAc...) asparagine glycan is linked to Asn-4. Residues 20–40 (LSLALASLIVAANLLLAVGIA) traverse the membrane as a helical segment. Residues 41–52 (GDRRLRSPPAGC) are Cytoplasmic-facing. The helical transmembrane segment at 53–73 (FFLSLLLAGLLTGLALPALPV) threads the bilayer. Topologically, residues 74-85 (LWSQSRRGYWSC) are extracellular. A disulfide bridge links Cys-85 with Cys-155. A helical membrane pass occupies residues 86 to 106 (LFLYLAPNFCFLSLLANLLLV). Residues 107 to 125 (HGERYMAVLRPLRPRGSMR) are Cytoplasmic-facing. A helical transmembrane segment spans residues 126–146 (LALLLTWAAPLLFASLPALGW). Topologically, residues 147 to 165 (NHWAPGGNCSSQAVFPAPY) are extracellular. The N-linked (GlcNAc...) asparagine glycan is linked to Asn-154. The chain crosses the membrane as a helical span at residues 166-186 (LYLEIYGLLLPAVGAAALLSV). The Cytoplasmic segment spans residues 187 to 230 (RVLVTAHRQLQDIRRLERAVCRGAPSALARALTWRQARAQAGAT). A helical transmembrane segment spans residues 231–251 (LLFGLCWGPYVATLLLSVLAF). Topologically, residues 252 to 261 (EQRPPLGPGT) are extracellular. Residues 262-282 (LLSLISLGSASAAAVPVAMGL) form a helical membrane-spanning segment. Residues 283–329 (GDQRYTGPWRVAAQKWLRMLRGRPQSSPGPSTAYHTSSQSSVDLDLN) lie on the Cytoplasmic side of the membrane. The disordered stretch occupies residues 304 to 329 (GRPQSSPGPSTAYHTSSQSSVDLDLN). Positions 306–329 (PQSSPGPSTAYHTSSQSSVDLDLN) are enriched in polar residues.

It belongs to the G-protein coupled receptor 1 family.

The protein resides in the cell membrane. Its function is as follows. Receptor for bile acid. Bile acid-binding induces its internalization, activation of extracellular signal-regulated kinase and intracellular cAMP production. May be involved in the suppression of macrophage functions by bile acids. Involved in bile acid promoted GLP1R secretion. The sequence is that of G-protein coupled bile acid receptor 1 (GPBAR1) from Bos taurus (Bovine).